Reading from the N-terminus, the 110-residue chain is UPF0122 protein SPG_1182 (110 aa).

Belongs to the UPF0122 family.

Functionally, might take part in the signal recognition particle (SRP) pathway. This is inferred from the conservation of its genetic proximity to ftsY/ffh. May be a regulatory protein. This Streptococcus pneumoniae serotype 19F (strain G54) protein is UPF0122 protein SPG_1182.